Here is a 250-residue protein sequence, read N- to C-terminus: 3-deoxy-manno-octulosonate cytidylyltransferase (250 aa).

It belongs to the KdsB family.

Its subcellular location is the cytoplasm. The catalysed reaction is 3-deoxy-alpha-D-manno-oct-2-ulosonate + CTP = CMP-3-deoxy-beta-D-manno-octulosonate + diphosphate. It participates in nucleotide-sugar biosynthesis; CMP-3-deoxy-D-manno-octulosonate biosynthesis; CMP-3-deoxy-D-manno-octulosonate from 3-deoxy-D-manno-octulosonate and CTP: step 1/1. It functions in the pathway bacterial outer membrane biogenesis; lipopolysaccharide biosynthesis. Functionally, activates KDO (a required 8-carbon sugar) for incorporation into bacterial lipopolysaccharide in Gram-negative bacteria. The sequence is that of 3-deoxy-manno-octulosonate cytidylyltransferase from Pectobacterium atrosepticum (strain SCRI 1043 / ATCC BAA-672) (Erwinia carotovora subsp. atroseptica).